Consider the following 258-residue polypeptide: Glutamate racemase (258 aa).

Residues 11 to 12 and 43 to 44 each bind substrate; these read DS and YG. The Proton donor/acceptor role is filled by cysteine 74. 75-76 serves as a coordination point for substrate; the sequence is NT. Catalysis depends on cysteine 187, which acts as the Proton donor/acceptor. 188–189 is a substrate binding site; the sequence is TH.

It belongs to the aspartate/glutamate racemases family.

The catalysed reaction is L-glutamate = D-glutamate. It functions in the pathway cell wall biogenesis; peptidoglycan biosynthesis. Its function is as follows. Provides the (R)-glutamate required for cell wall biosynthesis. This Bifidobacterium adolescentis (strain ATCC 15703 / DSM 20083 / NCTC 11814 / E194a) protein is Glutamate racemase.